The primary structure comprises 77 residues: MKEQKLIHEGLIIESLPNGMFRVRLDNEDLILGYVSGRIRRSFIRILPGDRVKIEVSRYDSTRGRIIYRLRNKDSND.

The S1-like domain occupies 1-71; that stretch reads MKEQKLIHEG…TRGRIIYRLR (71 aa).

It belongs to the IF-1 family. Component of the 30S ribosomal translation pre-initiation complex which assembles on the 30S ribosome in the order IF-2 and IF-3, IF-1 and N-formylmethionyl-tRNA(fMet); mRNA recruitment can occur at any time during PIC assembly.

The protein localises to the plastid. It is found in the chloroplast. In terms of biological role, one of the essential components for the initiation of protein synthesis. Stabilizes the binding of IF-2 and IF-3 on the 30S subunit to which N-formylmethionyl-tRNA(fMet) subsequently binds. Helps modulate mRNA selection, yielding the 30S pre-initiation complex (PIC). Upon addition of the 50S ribosomal subunit IF-1, IF-2 and IF-3 are released leaving the mature 70S translation initiation complex. The protein is Translation initiation factor IF-1, chloroplastic of Asarum canadense (Wild ginger).